Here is a 582-residue protein sequence, read N- to C-terminus: Hydrazine dehydrogenase (582 aa).

Positions Met-1 to Ala-32 are cleaved as a signal peptide. Residues Cys-121, Cys-124, His-125, His-141, Cys-151, Cys-154, His-155, His-159, Cys-170, Cys-175, His-176, His-191, Cys-216, Cys-219, His-220, Cys-227, Cys-230, His-231, His-234, Cys-247, Cys-250, His-251, His-267, Cys-297, Cys-300, His-301, His-306, Cys-342, Cys-345, His-346, His-454, and Tyr-462 each contribute to the heme c site. A disordered region spans residues Gly-561 to His-582. A compositionally biased stretch (basic and acidic residues) spans His-567–His-582.

Homotrimer; subunits are linked by two covalent bonds between Tyr-462 of one subunit and heme P460 of an adjacent subunit. May form 24-mer of an octamer of trimers. Heme c serves as cofactor.

It localises to the anammoxosome. The enzyme catalyses hydrazine + 4 Fe(III)-[cytochrome c] = N2 + 4 Fe(II)-[cytochrome c] + 4 H(+). Its pathway is nitrogen metabolism. Is strongly and competitively inhibited by NO and hydroxylamine. In terms of biological role, catalyzes the four-electron oxidation of hydrazine to N2. The electrons derived from hydrazine oxidation may be transferred to the quinone pool and exploited to promote the generation of proton-motive force (pmf) across the anammoxosome membrane. Is involved in anaerobic ammonium oxidation (anammox), a biological process in which nitrite is used as the electron acceptor in the conversion of ammonium to dinitrogen gas (N2) and water; this bacterial process has a major role in the Earth's nitrogen cycle and has been estimated to synthesize up to 50% of the dinitrogen gas emitted into our atmosphere from the oceans. Cannot oxidize hydroxylamine to NO. The chain is Hydrazine dehydrogenase from Kuenenia stuttgartiensis.